The sequence spans 654 residues: Carboxypeptidase Z (654 aa).

Residues M1 to A20 form the signal peptide. The FZ domain maps to T43 to P165. Cystine bridges form between C48–C114, C56–C107, C98–C134, C123–C162, and C127–C151. N62 carries N-linked (GlcNAc...) asparagine glycosylation. In terms of domain architecture, Peptidase M14 spans A191–V507. 2 residues coordinate Zn(2+): H253 and E256. N286 carries N-linked (GlcNAc...) asparagine glycosylation. H385 contacts Zn(2+). The active-site Proton donor/acceptor is E477. The tract at residues F596–S630 is disordered.

This sequence belongs to the peptidase M14 family. Zn(2+) serves as cofactor.

The protein resides in the secreted. Its subcellular location is the extracellular space. It localises to the extracellular matrix. Inhibited by 2-mercaptomethyl-3-guanidinoethylthiopropanoic acid (MGTA) and guanidinoethylmercaptosuccinic acid (GEMSA). Inhibited by chelating agents such as EDTA and EGTA. Functionally, cleaves substrates with C-terminal arginine residues. Probably modulates the Wnt signaling pathway, by cleaving some undefined protein. May play a role in cleavage during prohormone processing. The protein is Carboxypeptidase Z (Cpz) of Mus musculus (Mouse).